The following is a 100-amino-acid chain: MNTTQVILFAVVLVLTVTVGQADEDSAETSLLRKLEEAEASMFGQYLEESKNSPEQRCAGENVPCDKDRPGDCCSRYECLKPTGYGWWYASYYCYKKKSG.

The signal sequence occupies residues 1–22 (MNTTQVILFAVVLVLTVTVGQA). The propeptide occupies 23 to 57 (DEDSAETSLLRKLEEAEASMFGQYLEESKNSPEQR). Intrachain disulfides connect cysteine 58–cysteine 74, cysteine 65–cysteine 79, and cysteine 73–cysteine 94. At serine 99 the chain carries Serine amide.

This sequence belongs to the neurotoxin 14 (magi-1) family. 08 (Ltx-4) subfamily. Expressed by the venom duct.

It is found in the secreted. In terms of biological role, inhibits 31.17% of Cav2.1/CACNA1A current at 1 uM concentration. This chain is Omega toxin Ap2, found in Acanthoscurria paulensis (Brazilian giant black tarantula spider).